We begin with the raw amino-acid sequence, 298 residues long: Heme A synthase (298 aa).

Over 1 to 6 (MHRSLK) the chain is Cytoplasmic. A helical transmembrane segment spans residues 7–27 (IFGTLTSIGMVIVLMQGALVT). Residues 28 to 62 (KTESGEGCGATWPLCFGEVIPTNPAIETIIEYSHR) lie on the Extracellular side of the membrane. Cysteine 35 and cysteine 42 are joined by a disulfide. Glutamate 58 is an active-site residue. Histidine 61 contacts heme o. The chain crosses the membrane as a helical span at residues 63–83 (IVSGLLGAMVIILAIWAWRKL). The Cytoplasmic portion of the chain corresponds to 84-92 (SHIRETKVM). The chain crosses the membrane as a helical span at residues 93-113 (AILAVLFIIFQGLLGAGAVVF). Residues 114-117 (GQSH) lie on the Extracellular side of the membrane. The chain crosses the membrane as a helical span at residues 118-138 (AILALHFGISAISLATVVLLT). Histidine 123 contributes to the heme o binding site. The Cytoplasmic segment spans residues 139–158 (TLAFEDGKPNPPALIVKKGY). Residues 159–179 (KGYILAVFAYCYAVIYTGAYV) form a helical membrane-spanning segment. Topologically, residues 180–209 (KHTQATLACGDFPLCNGQWIPMLSGPVGAH) are extracellular. A disulfide bond links cysteine 188 and cysteine 194. The helical transmembrane segment at 210–230 (FFHRVAGTLLLILLVVALIWT) threads the bilayer. Histidine 212 serves as a coordination point for heme b. The Cytoplasmic portion of the chain corresponds to 231 to 244 (LRKYSHYRSLVWTH). A helical membrane pass occupies residues 245–265 (ILCVILVLTQYATGISIVLTG). Over 266–271 (NELFVA) the chain is Extracellular. A helical transmembrane segment spans residues 272 to 292 (MMHALIVSILFTTLCYIVMIL). Histidine 274 contributes to the heme b binding site. Topologically, residues 293–298 (SRNKAV) are cytoplasmic.

It belongs to the COX15/CtaA family. Type 1 subfamily. As to quaternary structure, interacts with CtaB. Heme b serves as cofactor.

It localises to the cell membrane. It carries out the reaction Fe(II)-heme o + 2 A + H2O = Fe(II)-heme a + 2 AH2. The protein operates within porphyrin-containing compound metabolism; heme A biosynthesis; heme A from heme O: step 1/1. Functionally, catalyzes the conversion of heme O to heme A by two successive hydroxylations of the methyl group at C8. The first hydroxylation forms heme I, the second hydroxylation results in an unstable dihydroxymethyl group, which spontaneously dehydrates, resulting in the formyl group of heme A. In Halalkalibacterium halodurans (strain ATCC BAA-125 / DSM 18197 / FERM 7344 / JCM 9153 / C-125) (Bacillus halodurans), this protein is Heme A synthase.